The chain runs to 158 residues: MGVEGLLEKGFVTTSADKVINWARTGSMWPMTFGLACCAVEMMQAGAARYDLDRFGIIFRPSPRQSDVMIVAGTLCNKMAPALRKVYDQMPEPRWVISMGSCANGGGYYHYSYSVVRGCDRVVPVDVYVPGCPPTAEALIWGIMQLQKKIRTTNTIAR.

4 residues coordinate [4Fe-4S] cluster: C37, C38, C102, and C132.

Belongs to the complex I 20 kDa subunit family. NDH-1 is composed of 14 different subunits. Subunits NuoB, C, D, E, F, and G constitute the peripheral sector of the complex. It depends on [4Fe-4S] cluster as a cofactor.

It localises to the cell inner membrane. It catalyses the reaction a quinone + NADH + 5 H(+)(in) = a quinol + NAD(+) + 4 H(+)(out). Its function is as follows. NDH-1 shuttles electrons from NADH, via FMN and iron-sulfur (Fe-S) centers, to quinones in the respiratory chain. Couples the redox reaction to proton translocation (for every two electrons transferred, four hydrogen ions are translocated across the cytoplasmic membrane), and thus conserves the redox energy in a proton gradient. The sequence is that of NADH-quinone oxidoreductase subunit B from Alkalilimnicola ehrlichii (strain ATCC BAA-1101 / DSM 17681 / MLHE-1).